Here is a 413-residue protein sequence, read N- to C-terminus: Pyruvate dehydrogenase complex subunit homolog DDB_G0271564, mitochondrial (413 aa).

A mitochondrion-targeting transit peptide spans 1–19 (MNRILKQVSNTKGKGIRFY). The Peripheral subunit-binding (PSBD) domain occupies 29–67 (YMFPSVRRLLVEYGINSSKEVTATGPQNRLLKGDVLAYI).

Belongs to the 2-oxoacid dehydrogenase family.

The protein resides in the mitochondrion. The pyruvate dehydrogenase complex catalyzes the overall conversion of pyruvate to acetyl-CoA and CO(2). It contains multiple copies of three enzymatic components: pyruvate dehydrogenase (E1), dihydrolipoamide acetyltransferase (E2) and lipoamide dehydrogenase (E3). In Dictyostelium discoideum (Social amoeba), this protein is Pyruvate dehydrogenase complex subunit homolog DDB_G0271564, mitochondrial (pdhX).